Here is a 485-residue protein sequence, read N- to C-terminus: Ribulose bisphosphate carboxylase large chain (485 aa).

Positions 1–2 (MS) are excised as a propeptide. Position 3 is an N-acetylproline (Pro3). Position 14 is an N6,N6,N6-trimethyllysine (Lys14). Positions 123 and 173 each coordinate substrate. Lys175 acts as the Proton acceptor in catalysis. Lys177 lines the substrate pocket. Residues Lys201, Asp203, and Glu204 each contribute to the Mg(2+) site. The residue at position 201 (Lys201) is an N6-carboxylysine. His294 serves as the catalytic Proton acceptor. Positions 295, 327, and 379 each coordinate substrate.

This sequence belongs to the RuBisCO large chain family. Type I subfamily. As to quaternary structure, heterohexadecamer of 8 large chains and 8 small chains; disulfide-linked. The disulfide link is formed within the large subunit homodimers. The cofactor is Mg(2+). In terms of processing, the disulfide bond which can form in the large chain dimeric partners within the hexadecamer appears to be associated with oxidative stress and protein turnover.

It localises to the plastid. Its subcellular location is the chloroplast. The catalysed reaction is 2 (2R)-3-phosphoglycerate + 2 H(+) = D-ribulose 1,5-bisphosphate + CO2 + H2O. The enzyme catalyses D-ribulose 1,5-bisphosphate + O2 = 2-phosphoglycolate + (2R)-3-phosphoglycerate + 2 H(+). Functionally, ruBisCO catalyzes two reactions: the carboxylation of D-ribulose 1,5-bisphosphate, the primary event in carbon dioxide fixation, as well as the oxidative fragmentation of the pentose substrate in the photorespiration process. Both reactions occur simultaneously and in competition at the same active site. The polypeptide is Ribulose bisphosphate carboxylase large chain (Flaveria bidentis (Coastal plain yellowtops)).